The sequence spans 323 residues: Alpha-tubulin N-acetyltransferase 1 (323 aa).

Residues 1–190 (MEFPFDVDAL…NNFVIFEGFF (190 aa)) form the N-acetyltransferase domain. The residue at position 56 (Lys-56) is an N6-acetyllysine; by autocatalysis. 124 to 137 (FYIHESVQRHGHGR) lines the acetyl-CoA pocket. Position 146 is an N6-acetyllysine; by autocatalysis (Lys-146). 160-169 (SQKLLKFLNK) contacts acetyl-CoA. A disordered region spans residues 196–239 (PPAPSLRATRHSRAAAVDPTPTAPARKLPPKRAEGDIKPYSSSD). Residues 209-220 (AAAVDPTPTAPA) are compositionally biased toward low complexity. Residues 226–239 (KRAEGDIKPYSSSD) are compositionally biased toward basic and acidic residues. Residues Lys-233 and Lys-244 each carry the N6-acetyllysine; by autocatalysis modification. A disordered region spans residues 252-287 (PLNRAPRRATPPAHPPPRSSSLGNSPERGPLRPFVP). Phosphoserine occurs at positions 272 and 276. Arg-305 is modified (asymmetric dimethylarginine). Residue Ser-315 is modified to Phosphoserine. Residue Arg-323 is modified to Omega-N-methylarginine.

The protein belongs to the acetyltransferase ATAT1 family. Component of the BBSome complex. Interacts with AP2 alpha-adaptins, including AP2A2, but not with AP1 gamma-adaptin (AP1G1/AP1G2); this interaction is required for efficient alpha-tubulin acetylation, hence clathrin-coated pits are sites of microtubule acetylation. Autoacetylation strongly increases tubulin acetylation.

It is found in the cytoplasm. It localises to the membrane. Its subcellular location is the clathrin-coated pit. The protein resides in the cell junction. The protein localises to the focal adhesion. It is found in the cell projection. It localises to the axon. Its subcellular location is the cytoskeleton. The protein resides in the spindle. It catalyses the reaction L-lysyl-[alpha-tubulin] + acetyl-CoA = N(6)-acetyl-L-lysyl-[alpha-tubulin] + CoA + H(+). Specifically acetylates 'Lys-40' in alpha-tubulin on the lumenal side of microtubules. Promotes microtubule destabilization and accelerates microtubule dynamics; this activity may be independent of acetylation activity. Acetylates alpha-tubulin with a slow enzymatic rate, due to a catalytic site that is not optimized for acetyl transfer. Enters the microtubule through each end and diffuses quickly throughout the lumen of microtubules. Acetylates only long/old microtubules because of its slow acetylation rate since it does not have time to act on dynamically unstable microtubules before the enzyme is released. Required for normal sperm flagellar function. Promotes directional cell locomotion and chemotaxis, through AP2A2-dependent acetylation of alpha-tubulin at clathrin-coated pits that are concentrated at the leading edge of migrating cells. May facilitate primary cilium assembly. This chain is Alpha-tubulin N-acetyltransferase 1, found in Macaca mulatta (Rhesus macaque).